Reading from the N-terminus, the 310-residue chain is Putative methyltransferase mtx subunit H (310 aa).

This sequence belongs to the MtrH family. As to quaternary structure, may be part of a complex composed of 3 subunits; MtxA, MtxH and MtxX.

In Methanosarcina acetivorans (strain ATCC 35395 / DSM 2834 / JCM 12185 / C2A), this protein is Putative methyltransferase mtx subunit H (mtxH).